The chain runs to 167 residues: Piercer of microtubule wall 1 protein (167 aa).

The interval 1-54 (MSEEKPQQSAEEPEPGEPKAKPAPEEPEPGEPKAKPAPEEPEPGEPKAKPAPEK) is disordered. Residues 16–54 (GEPKAKPAPEEPEPGEPKAKPAPEEPEPGEPKAKPAPEK) show a composition bias toward basic and acidic residues.

Belongs to the PIERCE1 family. As to quaternary structure, microtubule inner protein component of sperm flagellar doublet microtubules. Interacts with CFAP53, ODAD1 and ODAD3; the interactions link the outer dynein arms docking complex (ODA-DC) to the internal microtubule inner proteins (MIP) in cilium axoneme. As to expression, expressed in brain, lung, kidney and testis.

It localises to the cytoplasm. Its subcellular location is the cytoskeleton. It is found in the cilium axoneme. The protein resides in the flagellum axoneme. Microtubule inner protein involved in the attachment of outer dynein arms (ODAs) to dynein-decorated doublet microtubules (DMTs) in cilia axoneme. Functions at the initial step of left-right asymmetry specification of the visceral organs. This Mus musculus (Mouse) protein is Piercer of microtubule wall 1 protein.